We begin with the raw amino-acid sequence, 112 residues long: Ferredoxin, plant-type (112 aa).

One can recognise a 2Fe-2S ferredoxin-type domain in the interval 6–97 (YEVFEVLSGQ…DLTIEYFRHV (92 aa)). [2Fe-2S] cluster-binding residues include cysteine 41, cysteine 46, cysteine 49, and cysteine 81.

Belongs to the 2Fe2S plant-type ferredoxin family.

The protein operates within aromatic compound metabolism; catechol degradation. Its function is as follows. Ferredoxins are iron-sulfur proteins that transfer electrons in a wide variety of metabolic reactions. The chain is Ferredoxin, plant-type (xylT) from Pseudomonas putida (Arthrobacter siderocapsulatus).